Reading from the N-terminus, the 213-residue chain is tRNA (guanine-N(7)-)-methyltransferase (213 aa).

S-adenosyl-L-methionine-binding residues include Asp40, Glu65, Asn92, and Asp118. Asp118 is a catalytic residue. Substrate-binding residues include Lys122 and Asp154.

It belongs to the class I-like SAM-binding methyltransferase superfamily. TrmB family.

It catalyses the reaction guanosine(46) in tRNA + S-adenosyl-L-methionine = N(7)-methylguanosine(46) in tRNA + S-adenosyl-L-homocysteine. It participates in tRNA modification; N(7)-methylguanine-tRNA biosynthesis. Functionally, catalyzes the formation of N(7)-methylguanine at position 46 (m7G46) in tRNA. The protein is tRNA (guanine-N(7)-)-methyltransferase of Synechococcus elongatus (strain ATCC 33912 / PCC 7942 / FACHB-805) (Anacystis nidulans R2).